We begin with the raw amino-acid sequence, 1400 residues long: Alpha-(1-&gt;3)-arabinofuranosyltransferase (1400 aa).

A signal peptide spans M1–P30. A run of 8 helical transmembrane segments spans residues Y67–V87, L91–L111, I139–A159, V179–I199, A215–L235, L282–G302, L314–A334, and V401–G421. The region spanning A700–R883 is the F5/8 type C domain. The next 4 membrane-spanning stretches (helical) occupy residues L1256–F1276, W1297–V1317, V1338–P1358, and W1369–A1389.

The protein resides in the membrane. It carries out the reaction Adds an alpha-D-arabinofuranosyl group from trans,octacis-decaprenylphospho-beta-D-arabinofuranose at the 3-O-position of an alpha-(1-&gt;5)-arabinofuranan chain attached to a beta-(1-&gt;5)-galactofuranan chain.. It functions in the pathway cell wall biogenesis; cell wall polysaccharide biosynthesis. Its function is as follows. Involved in the biosynthesis of the arabinogalactan (AG) region of the mycolylarabinogalactan-peptidoglycan (mAGP) complex, an essential component of the mycobacterial cell wall. Catalyzes the addition of an arabinofuranosyl (Araf) residue from the sugar donor decaprenyl-phospho-arabinose (DPA) on the C-3 of an alpha-(1-&gt;5)-linked Araf from the arabinan backbone of AG. The polypeptide is Alpha-(1-&gt;3)-arabinofuranosyltransferase (aftD) (Mycobacterium tuberculosis (strain ATCC 25618 / H37Rv)).